The following is a 102-amino-acid chain: Large ribosomal subunit protein bL21 (102 aa).

Belongs to the bacterial ribosomal protein bL21 family. In terms of assembly, part of the 50S ribosomal subunit. Contacts protein L20.

In terms of biological role, this protein binds to 23S rRNA in the presence of protein L20. In Latilactobacillus sakei subsp. sakei (strain 23K) (Lactobacillus sakei subsp. sakei), this protein is Large ribosomal subunit protein bL21.